Here is a 1953-residue protein sequence, read N- to C-terminus: Putative surface-exposed virulence protein BigA (1953 aa).

The first 27 residues, 1–27, serve as a signal peptide directing secretion; it reads MNPMQKKKLISIAIALTLQSYYIPAIA. 3 disordered regions span residues 31 to 50, 88 to 258, and 1496 to 1517; these read NDDE…EKRA, GGGD…TFSN, and TTAP…PQQL. The stretch at 101 to 103 is one 1; truncated repeat; the sequence is PDN. Positions 101–252 are 15 X 11 AA tandem repeats; it reads PDNGGDVTPP…DDDDTPPDDS (152 aa). The stretch at 104–113 is one 2; truncated repeat; the sequence is GGDVTPPDDG. The stretch at 114–122 is one 3; truncated repeat; it reads GNVTPPDDG. 11 tandem repeats follow at residues 123–133, 134–144, 145–155, 156–166, 167–177, 178–188, 189–199, 200–210, 211–221, 222–232, and 233–243. 2 stretches are compositionally biased toward acidic residues: residues 141–177 and 185–249; these read DSGD…DSGD and DSGD…DTPP. Residues 244–252 form a 15; truncated repeat; it reads DDDTPPDDS. One can recognise an Autotransporter domain in the interval 1649–1952; it reads SGAQATTVFR…GFMLNVKKTF (304 aa).

In Salmonella typhimurium (strain LT2 / SGSC1412 / ATCC 700720), this protein is Putative surface-exposed virulence protein BigA (bigA).